A 358-amino-acid chain; its full sequence is CCAAT/enhancer-binding protein alpha (358 aa).

The interval Met-1 to Ile-55 is disordered. Residues Met-1–Pro-70 form a required to repress E2F1:TFDP1-mediated transcription, to inhibit cell cycle and to induce adipocyte differentiation region. Low complexity predominate over residues Ala-29–Pro-39. Positions Ala-40 to Pro-49 are enriched in pro residues. The interval Gly-54 to Ala-72 is required for interaction with TRIB1. Positions Pro-128 to Pro-204 are required to induce adipocyte differentiation. Lys-161 bears the N6-acetyllysine; alternate mark. Lys-161 participates in a covalent cross-link: Glycyl lysine isopeptide (Lys-Gly) (interchain with G-Cter in SUMO2); alternate. 2 disordered regions span residues Leu-178 to Leu-201 and Thr-217 to Arg-291. Pro residues-rich tracts occupy residues Tyr-181–Ala-199 and His-224–Ala-238. Positions Gln-182 to Pro-198 are required to functionally cooperate with SREBF1 in promoter activation. Ser-190 bears the Phosphoserine mark. Phosphothreonine; by GSK3 is present on residues Thr-226 and Thr-230. Ser-234 bears the Phosphoserine; by GSK3 mark. Residues Pro-239–Ala-259 are compositionally biased toward low complexity. Residues Ala-244–Ala-358 are interaction with FOXO1. Positions Lys-276–Arg-291 are enriched in basic and acidic residues. The bZIP domain occupies Ser-282–Leu-345. Residues Tyr-285–Arg-300 mediate DNA binding. The interval Arg-286–Lys-313 is basic motif. The segment at Leu-317 to Leu-345 is leucine-zipper.

Belongs to the bZIP family. C/EBP subfamily. Binds DNA as a homodimer and as a heterodimer. Can form stable heterodimers with CEBPB, CEBPD, CEBPE and CEBPG. Interacts with PRDM16. Interacts with UBN1. Interacts with ZNF638; this interaction increases transcriptional activation. Interacts with the complex TFDP2:E2F1; the interaction prevents CEBPA binding to target gene promoters and represses its transcriptional activity. Interacts with RB1. Interacts (when phosphorylated at Ser-190) with CDK2, CDK4, E2F4 and SMARCA2. Interacts with SREBPF1. Interacts with FOXO1 (via the Fork-head domain); the interaction increases when FOXO1 is deacetylated. Interacts with SIX1. Interacts (via recognition sequence) with TRIB1. Interacts (via bZIP domain) with OVOL2 (via zinc-finger domains); the interaction inhibits the transcription factor activity of CEBPA and is required to repress adipogenesis. In terms of assembly, interacts with TAF1A and UBTF. As to quaternary structure, interacts with TAF1A and UBTF. Interacts with NPM1. (Microbial infection) Interacts with HBV protein X. In terms of assembly, (Microbial infection) Interacts with Epstein-Barr virus lytic switch protein BZLF1; this interaction induces G1 cell cycle arrest. In terms of processing, phosphorylation at Ser-190 is required for interaction with CDK2, CDK4 and SWI/SNF complex leading to cell cycle inhibition. Dephosphorylated at Ser-190 by protein phosphatase 2A (PP2A) through PI3K/AKT signaling pathway regulation. Phosphorylation at Thr-226 and Thr-230 by GSK3 is constitutive in adipose tissue and lung. In liver, both Thr-226 and Thr-230 are phosphorylated only during feeding but not during fasting. Phosphorylation of the GSK3 consensus sites selectively decreases transactivation activity on IRE-controlled promoters. Post-translationally, sumoylated, sumoylation blocks the inhibitory effect on cell proliferation by disrupting the interaction with SMARCA2. Ubiquitinated by COP1 upon interaction with TRIB1.

Its subcellular location is the nucleus. The protein resides in the nucleolus. In terms of biological role, transcription factor that coordinates proliferation arrest and the differentiation of myeloid progenitors, adipocytes, hepatocytes, and cells of the lung and the placenta. Binds directly to the consensus DNA sequence 5'-T[TG]NNGNAA[TG]-3' acting as an activator on distinct target genes. During early embryogenesis, plays essential and redundant functions with CEBPB. Essential for the transition from common myeloid progenitors (CMP) to granulocyte/monocyte progenitors (GMP). Critical for the proper development of the liver and the lung. Necessary for terminal adipocyte differentiation, is required for postnatal maintenance of systemic energy homeostasis and lipid storage. To regulate these different processes at the proper moment and tissue, interplays with other transcription factors and modulators. Down-regulates the expression of genes that maintain cells in an undifferentiated and proliferative state through E2F1 repression, which is critical for its ability to induce adipocyte and granulocyte terminal differentiation. Reciprocally E2F1 blocks adipocyte differentiation by binding to specific promoters and repressing CEBPA binding to its target gene promoters. Proliferation arrest also depends on a functional binding to SWI/SNF complex. In liver, regulates gluconeogenesis and lipogenesis through different mechanisms. To regulate gluconeogenesis, functionally cooperates with FOXO1 binding to IRE-controlled promoters and regulating the expression of target genes such as PCK1 or G6PC1. To modulate lipogenesis, interacts and transcriptionally synergizes with SREBF1 in promoter activation of specific lipogenic target genes such as ACAS2. In adipose tissue, seems to act as FOXO1 coactivator accessing to ADIPOQ promoter through FOXO1 binding sites. Its function is as follows. Can act as dominant-negative. Binds DNA and have transctivation activity, even if much less efficiently than isoform 2. Does not inhibit cell proliferation. Functionally, directly and specifically enhances ribosomal DNA transcription interacting with RNA polymerase I-specific cofactors and inducing histone acetylation. The polypeptide is CCAAT/enhancer-binding protein alpha (Homo sapiens (Human)).